A 548-amino-acid polypeptide reads, in one-letter code: Hydroxylamine reductase (548 aa).

[4Fe-4S] cluster-binding residues include C3, C6, C15, and C21. Hybrid [4Fe-2O-2S] cluster-binding residues include H240, E264, C308, C402, C430, C455, E490, and K492. Residue C402 is modified to Cysteine persulfide.

The protein belongs to the HCP family. [4Fe-4S] cluster serves as cofactor. It depends on hybrid [4Fe-2O-2S] cluster as a cofactor.

The protein localises to the cytoplasm. It carries out the reaction A + NH4(+) + H2O = hydroxylamine + AH2 + H(+). Catalyzes the reduction of hydroxylamine to form NH(3) and H(2)O. The chain is Hydroxylamine reductase from Parabacteroides distasonis (strain ATCC 8503 / DSM 20701 / CIP 104284 / JCM 5825 / NCTC 11152).